Consider the following 151-residue polypeptide: Large ribosomal subunit protein bL17 (151 aa).

This sequence belongs to the bacterial ribosomal protein bL17 family. In terms of assembly, part of the 50S ribosomal subunit. Contacts protein L32.

The polypeptide is Large ribosomal subunit protein bL17 (Chlorobium limicola (strain DSM 245 / NBRC 103803 / 6330)).